Reading from the N-terminus, the 164-residue chain is MTEMQLLEMLKKEASSVHIKDIMSASVYLREDARYLPPREQKEFIERFTRAFFNRIRDIKNDKNIYQGHVDTAGLKEFIDFLDQQLSQAKTENERCFQKIARIITIYVTFVRKEPVHPVGTRFPGGFTVRREGNVFYCPVKDRQINTPGALCRFCVSIQDHDIS.

This sequence belongs to the UPF0305 family.

In Methanothermobacter thermautotrophicus (strain ATCC 29096 / DSM 1053 / JCM 10044 / NBRC 100330 / Delta H) (Methanobacterium thermoautotrophicum), this protein is UPF0305 protein MTH_812.